The sequence spans 679 residues: Glycine--tRNA ligase beta subunit (679 aa).

The protein belongs to the class-II aminoacyl-tRNA synthetase family. In terms of assembly, tetramer of two alpha and two beta subunits.

The protein localises to the cytoplasm. The catalysed reaction is tRNA(Gly) + glycine + ATP = glycyl-tRNA(Gly) + AMP + diphosphate. The polypeptide is Glycine--tRNA ligase beta subunit (Streptococcus pyogenes serotype M28 (strain MGAS6180)).